The primary structure comprises 296 residues: Nicotinate dehydrogenase FAD-subunit (296 aa).

In terms of domain architecture, FAD-binding PCMH-type spans 1–179 (MKDFEFFAPK…TEVIIDRPDA (179 aa)). FAD-binding positions include 29–36 (IIAGGTDL), Gly-101, 110–114 (TIGGN), Asp-123, Arg-160, Met-169, and Lys-187.

As to quaternary structure, heterooctamer of NDHM, NDHL, NDHS and NDHF. Dimer of heterotetramers. Requires FAD as cofactor.

It carries out the reaction nicotinate + NADP(+) + H2O = 6-hydroxynicotinate + NADPH + H(+). It participates in cofactor degradation; nicotinate degradation; 6-hydroxynicotinate from nicotinate: step 1/1. With respect to regulation, reversibly inactivated by selenide and sulfide. Not inhibited by cyanide. Functionally, catalyzes the hydroxylation of nicotinate to 6-hydroxynicotinate. Also active against 2-pyrazinecarboxylic acid, but inactive against other nicotinate analogs. This Eubacterium barkeri (Clostridium barkeri) protein is Nicotinate dehydrogenase FAD-subunit (ndhF).